The sequence spans 235 residues: RNA polymerase sigma-E factor (235 aa).

The Polymerase core binding motif lies at 82–95 (DLISVGTIGLIKAV). The segment at residues 202–221 (QKEVADMLGISQSYISRLEK) is a DNA-binding region (H-T-H motif).

This sequence belongs to the sigma-70 factor family.

Functionally, sigma factors are initiation factors that promote the attachment of RNA polymerase to specific initiation sites and are then released. This sigma factor is responsible for the expression of sporulation specific genes. This Clostridium acetobutylicum (strain ATCC 824 / DSM 792 / JCM 1419 / IAM 19013 / LMG 5710 / NBRC 13948 / NRRL B-527 / VKM B-1787 / 2291 / W) protein is RNA polymerase sigma-E factor (sigE).